The following is a 320-amino-acid chain: Malate dehydrogenase (320 aa).

NAD(+) contacts are provided by residues 10–15 (GAGMIG) and D34. Residues R83 and R89 each contribute to the substrate site. NAD(+)-binding positions include N96 and 119–121 (ITN). Residues N121 and R152 each contribute to the substrate site. H176 (proton acceptor) is an active-site residue.

It belongs to the LDH/MDH superfamily. MDH type 3 family.

The catalysed reaction is (S)-malate + NAD(+) = oxaloacetate + NADH + H(+). Functionally, catalyzes the reversible oxidation of malate to oxaloacetate. The polypeptide is Malate dehydrogenase (Caulobacter sp. (strain K31)).